Consider the following 109-residue polypeptide: Putative pterin-4-alpha-carbinolamine dehydratase (109 aa).

It belongs to the pterin-4-alpha-carbinolamine dehydratase family.

It carries out the reaction (4aS,6R)-4a-hydroxy-L-erythro-5,6,7,8-tetrahydrobiopterin = (6R)-L-erythro-6,7-dihydrobiopterin + H2O. The sequence is that of Putative pterin-4-alpha-carbinolamine dehydratase from Halorhodospira halophila (strain DSM 244 / SL1) (Ectothiorhodospira halophila (strain DSM 244 / SL1)).